The primary structure comprises 308 residues: Protein translocase subunit SecF (308 aa).

6 consecutive transmembrane segments (helical) span residues 10-30 (LFFAISLAMIIPGLIVMAIFG), 129-149 (LAVSIAALAVIIYITWAFRGV), 160-180 (IIAMIHDVLVVISLVSIGGVL), 181-201 (FGWQVDALFLTALLSVIGFSV), 241-261 (TQLMTVEYMLLAIALFGGITL), and 264-284 (FAIILLVGLFMGTYSSIFIAA).

Belongs to the SecD/SecF family. SecF subfamily. In terms of assembly, forms a complex with SecD. Part of the essential Sec protein translocation apparatus which comprises SecA, SecYEG and auxiliary proteins SecDF. Other proteins may also be involved.

It is found in the cell membrane. In terms of biological role, part of the Sec protein translocase complex. Interacts with the SecYEG preprotein conducting channel. SecDF uses the proton motive force (PMF) to complete protein translocation after the ATP-dependent function of SecA. The sequence is that of Protein translocase subunit SecF from Anaerolinea thermophila (strain DSM 14523 / JCM 11388 / NBRC 100420 / UNI-1).